We begin with the raw amino-acid sequence, 383 residues long: Succinyl-diaminopimelate desuccinylase (383 aa).

H73 serves as a coordination point for Zn(2+). D75 is an active-site residue. Residue D107 coordinates Zn(2+). E141 serves as the catalytic Proton acceptor. Zn(2+)-binding residues include E142, E170, and H356.

It belongs to the peptidase M20A family. DapE subfamily. As to quaternary structure, homodimer. Zn(2+) is required as a cofactor. Co(2+) serves as cofactor.

The enzyme catalyses N-succinyl-(2S,6S)-2,6-diaminopimelate + H2O = (2S,6S)-2,6-diaminopimelate + succinate. It functions in the pathway amino-acid biosynthesis; L-lysine biosynthesis via DAP pathway; LL-2,6-diaminopimelate from (S)-tetrahydrodipicolinate (succinylase route): step 3/3. In terms of biological role, catalyzes the hydrolysis of N-succinyl-L,L-diaminopimelic acid (SDAP), forming succinate and LL-2,6-diaminopimelate (DAP), an intermediate involved in the bacterial biosynthesis of lysine and meso-diaminopimelic acid, an essential component of bacterial cell walls. The sequence is that of Succinyl-diaminopimelate desuccinylase from Pseudomonas fluorescens (strain ATCC BAA-477 / NRRL B-23932 / Pf-5).